A 353-amino-acid polypeptide reads, in one-letter code: Phosphoribosylformylglycinamidine cyclo-ligase (353 aa).

This sequence belongs to the AIR synthase family.

Its subcellular location is the cytoplasm. It catalyses the reaction 2-formamido-N(1)-(5-O-phospho-beta-D-ribosyl)acetamidine + ATP = 5-amino-1-(5-phospho-beta-D-ribosyl)imidazole + ADP + phosphate + H(+). It participates in purine metabolism; IMP biosynthesis via de novo pathway; 5-amino-1-(5-phospho-D-ribosyl)imidazole from N(2)-formyl-N(1)-(5-phospho-D-ribosyl)glycinamide: step 2/2. The protein is Phosphoribosylformylglycinamidine cyclo-ligase of Dinoroseobacter shibae (strain DSM 16493 / NCIMB 14021 / DFL 12).